Here is a 269-residue protein sequence, read N- to C-terminus: GTP cyclohydrolase FolE2 (269 aa).

This sequence belongs to the GTP cyclohydrolase IV family.

It carries out the reaction GTP + H2O = 7,8-dihydroneopterin 3'-triphosphate + formate + H(+). The protein operates within cofactor biosynthesis; 7,8-dihydroneopterin triphosphate biosynthesis; 7,8-dihydroneopterin triphosphate from GTP: step 1/1. Converts GTP to 7,8-dihydroneopterin triphosphate. This is GTP cyclohydrolase FolE2 from Burkholderia vietnamiensis (strain G4 / LMG 22486) (Burkholderia cepacia (strain R1808)).